The primary structure comprises 583 residues: Cell division protein FtsZ (583 aa).

Residues 24–28, 111–113, E142, R146, and D190 each bind GTP; these read GGGGN and GTG. 2 disordered regions span residues 391-425 and 510-583; these read HQQP…VQQA and TNSL…RQSN. Residues 412 to 425 are compositionally biased toward low complexity; sequence APAALRPAQPVQQA.

It belongs to the FtsZ family. Homodimer. Polymerizes to form a dynamic ring structure in a strictly GTP-dependent manner. Interacts directly with several other division proteins.

It localises to the cytoplasm. Functionally, essential cell division protein that forms a contractile ring structure (Z ring) at the future cell division site. The regulation of the ring assembly controls the timing and the location of cell division. One of the functions of the FtsZ ring is to recruit other cell division proteins to the septum to produce a new cell wall between the dividing cells. Binds GTP and shows GTPase activity. This is Cell division protein FtsZ from Rhizobium radiobacter (Agrobacterium tumefaciens).